A 558-amino-acid chain; its full sequence is MSAANPETPNSTISREASTQSSSAAASQGWVLPEGKIVPNTVFVGGIDARMDETEIGSCFGRYGSVKEVKIITNRTGVSKGYGFVSFVNDVDVQKIVGSQIHFHGKKLKLGPAIRKQKLCARHVQPRPLVVNPPPPPQFQNVWRNPNTETYLQPQITPNPVTQHVQAYSAYPHSPGQVITGCQLLVYNYQEYPTYPDSAFQVTTGYQLPVYNYQPFPAYPRSPFQVTAGYQLPVYNYQAFPAYPNSPFQVATGYQFPVYNYQPFPAYPSSPFQVTAGYQLPVYNYQAFPAYPNSPFQVATGYQFPVYNYQAFPAYPNSPVQVTTGYQLPVYNYQAFPAYPNSPVQVTTGYQLPVYNYQAFPAYPSSPFQVTTGYQLPVYNYQAFPAYPSSPFQVTTGYQLPVYNYQAFPAYPSSPFQVTTGYQLPVYNYQAFPAYPSSPFQVTTGYQLPVYNYQAFPAYPSSPFQVTTGYQLPVYNYQAFPAYPSSPFQVTTGYQLPVYNYQAFPAYPNSAVQVTTGYQFHVYNYQMPPQCPVGEQRRNLWTEAYKWWYLVCLIQRRD.

Positions 1-10 (MSAANPETPN) are enriched in polar residues. Residues 1–27 (MSAANPETPNSTISREASTQSSSAAAS) form a disordered region. Residues 11 to 27 (STISREASTQSSSAAAS) show a composition bias toward low complexity. Residues 40–115 (NTVFVGGIDA…KKLKLGPAIR (76 aa)) form the RRM domain. 15 consecutive DAZ domains span residues 167–190 (AYSA…YNYQ), 191–214 (EYPT…YNYQ), 215–238 (PFPA…YNYQ), 239–262 (AFPA…YNYQ), 263–286 (PFPA…YNYQ), 287–310 (AFPA…YNYQ), 311–334 (AFPA…YNYQ), 335–358 (AFPA…YNYQ), 359–382 (AFPA…YNYQ), 383–406 (AFPA…YNYQ), 407–430 (AFPA…YNYQ), 431–454 (AFPA…YNYQ), 455–478 (AFPA…YNYQ), 479–502 (AFPA…YNYQ), and 503–526 (AFPA…YNYQ).

The protein belongs to the RRM DAZ family. Forms a heterodimer with BOLL and DAZL. Interacts with PUM2, DAZAP1, DAZAP2, DZIP1 and DZIP3. Testis specific.

It is found in the cytoplasm. The protein resides in the nucleus. RNA-binding protein that plays an essential role in spermatogenesis. May act by binding to the 3'-UTR of mRNAs and regulating their translation. This Homo sapiens (Human) protein is Deleted in azoospermia protein 2 (DAZ2).